Reading from the N-terminus, the 324-residue chain is Quinolinate synthase (324 aa).

Positions 39 and 56 each coordinate iminosuccinate. Cysteine 101 lines the [4Fe-4S] cluster pocket. Residues 127–129 (YIN) and serine 144 each bind iminosuccinate. Cysteine 187 serves as a coordination point for [4Fe-4S] cluster. Residues 213–215 (HPE) and threonine 230 each bind iminosuccinate. Cysteine 280 contacts [4Fe-4S] cluster.

Belongs to the quinolinate synthase family. Type 2 subfamily. [4Fe-4S] cluster is required as a cofactor.

It is found in the cytoplasm. It catalyses the reaction iminosuccinate + dihydroxyacetone phosphate = quinolinate + phosphate + 2 H2O + H(+). It functions in the pathway cofactor biosynthesis; NAD(+) biosynthesis; quinolinate from iminoaspartate: step 1/1. Functionally, catalyzes the condensation of iminoaspartate with dihydroxyacetone phosphate to form quinolinate. The protein is Quinolinate synthase of Trichormus variabilis (strain ATCC 29413 / PCC 7937) (Anabaena variabilis).